Consider the following 437-residue polypeptide: Succinate--CoA ligase [ADP-forming] subunit beta, hydrogenosomal (437 aa).

The N-terminal 27 residues, 1-27, are a transit peptide targeting the hydrogenosome; that stretch reads MLANVTRSTSKAAPALASIAQTAQKRF. The ATP-grasp domain maps to 36-278; sequence MNLLHEYNVN…TTQEDPREVA (243 aa). Residues K73, 80–82, and E141 contribute to the ATP site; that span reads GRG. Positions 233 and 247 each coordinate Mg(2+). Residues N299 and 356–358 contribute to the substrate site; that span reads GIM.

Belongs to the succinate/malate CoA ligase beta subunit family. In terms of assembly, heterodimer of an alpha and a beta subunit. It depends on Mg(2+) as a cofactor.

Its subcellular location is the hydrogenosome. It catalyses the reaction succinate + ATP + CoA = succinyl-CoA + ADP + phosphate. It functions in the pathway carbohydrate metabolism; tricarboxylic acid cycle; succinate from succinyl-CoA (ligase route): step 1/1. Functionally, succinyl-CoA synthetase functions in the citric acid cycle (TCA), coupling the hydrolysis of succinyl-CoA to the synthesis of ATP and thus represents the only step of substrate-level phosphorylation in the TCA. The beta subunit provides nucleotide specificity of the enzyme and binds the substrate succinate, while the binding sites for coenzyme A and phosphate are found in the alpha subunit. The protein is Succinate--CoA ligase [ADP-forming] subunit beta, hydrogenosomal of Neocallimastix frontalis (Rumen fungus).